The following is a 254-amino-acid chain: UstYa family oxidase phomYc' (254 aa).

Residues Leu38–Gly58 form a helical membrane-spanning segment. A glycan (N-linked (GlcNAc...) asparagine) is linked at Asn64. An HXXHC 1 motif is present at residues His138–Cys142. Asn159 carries an N-linked (GlcNAc...) asparagine glycan. An HXXHC 2 motif is present at residues His173–Cys177.

It belongs to the ustYa family.

The protein resides in the membrane. It participates in mycotoxin biosynthesis. UstYa family oxidase; part of the gene cluster that mediates the biosynthesis of the phomopsins, a group of hexapeptide mycotoxins which infects lupins and causes lupinosis disease in livestock. Within the pathway, phomYc' catalyzes the desaturation of the Ile moiety into 2,3-dehydroisoleucine (dIle). The pathway starts with the processing of the precursor phomA' by several endopeptidases including kexin proteases as well as the cluster-specific S41 family peptidase phomP1 and the oligopeptidase phomG' to produce 10 identical copies of the hexapeptide Tyr-Val-Ile-Pro-Ile-Asp. After being excised from the precursor peptide, the core peptides are cyclized and modified post-translationally by enzymes encoded within the gene cluster. The timing and order of proteolysis of the phomA' precursor and PTMs are still unknown. Two tyrosinase-like enzymes, phomQ1' and phomQ2, catalyze the chlorination and hydroxylation of Tyr, respectively. PhomYb, is proposed to be involved in the construction of the macrocyclic structure. The other 4 ustYa family proteins may be involved in PTMs that generate the unique structure of phomopsin A. PhomYa' is required for the hydroxylation of C-beta of Tyr. PhomYc', phomYd', and phomYe are responsible for the biosynthesis of 2,3-dehydroisoleucine (dIle), 2,3-dehydroaspartic acid (dAsp), and 3,4-dehydroproline (dPro), respectively. While dIle formation by phomYc' is indispensable for the installation of dAsp by phomYd', the order of the other PTMs have not been elucidated yet. Most of the biosynthetic enzymes likely have broad substrate specificity, and thus, there might be a metabolic grid from a precursor to phomopsin A. The enzyme(s) responsible for the biosynthesis of 3,4-dehydrovaline (dVal) have also not been identified yet. Finally, phomM' acts as an S-adenosylmethionine-dependent alpha-N-methyltransferase that catalyzes two successive N-methylation reactions, converting N-desmethyl-phomopsin A to phomopsin A and phomopsin A further to an N,N-dimethylated congener called phomopsin E. The polypeptide is UstYa family oxidase phomYc' (Diaporthe leptostromiformis (Lupinosis disease fungus)).